The following is a 779-amino-acid chain: uncharacterized protein (779 aa).

[4Fe-4S] cluster is bound by residues C72 and C75.

Belongs to the prokaryotic molybdopterin-containing oxidoreductase family. The cofactor is [4Fe-4S] cluster. Mo-bis(molybdopterin guanine dinucleotide) serves as cofactor.

This is an uncharacterized protein from Mycobacterium bovis (strain ATCC BAA-935 / AF2122/97).